The primary structure comprises 420 residues: Glucose-1-phosphate adenylyltransferase (420 aa).

Residues Y108, G173, 188–189 (EK), and S206 contribute to the alpha-D-glucose 1-phosphate site.

This sequence belongs to the bacterial/plant glucose-1-phosphate adenylyltransferase family. In terms of assembly, homotetramer.

It carries out the reaction alpha-D-glucose 1-phosphate + ATP + H(+) = ADP-alpha-D-glucose + diphosphate. It functions in the pathway glycan biosynthesis; glycogen biosynthesis. Functionally, involved in the biosynthesis of ADP-glucose, a building block required for the elongation reactions to produce glycogen. Catalyzes the reaction between ATP and alpha-D-glucose 1-phosphate (G1P) to produce pyrophosphate and ADP-Glc. This is Glucose-1-phosphate adenylyltransferase from Paraburkholderia phytofirmans (strain DSM 17436 / LMG 22146 / PsJN) (Burkholderia phytofirmans).